A 478-amino-acid chain; its full sequence is Cytochrome c-552 (478 aa).

The first 26 residues, 1 to 26 (MARKTLRARRFFSLIFPFFFITSVYA), serve as a signal peptide directing secretion. Histidine 94 provides a ligand contact to heme c. Residues cysteine 122, cysteine 125, and lysine 126 each coordinate heme. Cysteine 160, cysteine 163, histidine 164, cysteine 209, cysteine 212, and histidine 213 together coordinate heme c. Glutamate 215, tyrosine 216, lysine 261, and glutamine 263 together coordinate Ca(2+). A substrate-binding site is contributed by tyrosine 216. Residue histidine 264 participates in substrate binding. The heme c site is built by histidine 275, cysteine 282, cysteine 285, histidine 286, histidine 301, cysteine 314, cysteine 317, histidine 318, and histidine 393.

It belongs to the cytochrome c-552 family. It depends on Ca(2+) as a cofactor. The cofactor is heme c.

The protein resides in the periplasm. It carries out the reaction 6 Fe(III)-[cytochrome c] + NH4(+) + 2 H2O = 6 Fe(II)-[cytochrome c] + nitrite + 8 H(+). The protein operates within nitrogen metabolism; nitrate reduction (assimilation). Catalyzes the reduction of nitrite to ammonia, consuming six electrons in the process. The polypeptide is Cytochrome c-552 (Salmonella paratyphi C (strain RKS4594)).